The sequence spans 109 residues: METLDKIKKQISENPILIYMKGSPKFPSCGFSARAVEALMHCKVPFGYVDILQHPDIRAELPAYANWPTFPQLWVDGELVGGCDIILEMFQQGELQTLLADVAAKYPQE.

One can recognise a Glutaredoxin domain in the interval 4–106 (LDKIKKQISE…TLLADVAAKY (103 aa)). Lysine 21 contacts glutathione. Residue cysteine 29 participates in [2Fe-2S] cluster binding. Residues arginine 58, phenylalanine 70, and 83 to 84 (CD) each bind glutathione.

It belongs to the glutaredoxin family. Monothiol subfamily. Homodimer.

It is found in the cytoplasm. In terms of biological role, monothiol glutaredoxin involved in the biogenesis of iron-sulfur clusters. This is Glutaredoxin 4 (grxD) from Pasteurella multocida (strain Pm70).